Consider the following 463-residue polypeptide: Glutamate--tRNA ligase (463 aa).

Residues 8–18 (PSPTGYLHIGG) carry the 'HIGH' region motif. A 'KMSKS' region motif is present at residues 236–240 (RLSKR). Residue lysine 239 coordinates ATP.

The protein belongs to the class-I aminoacyl-tRNA synthetase family. Glutamate--tRNA ligase type 1 subfamily. Monomer.

It is found in the cytoplasm. It catalyses the reaction tRNA(Glu) + L-glutamate + ATP = L-glutamyl-tRNA(Glu) + AMP + diphosphate. Its function is as follows. Catalyzes the attachment of glutamate to tRNA(Glu) in a two-step reaction: glutamate is first activated by ATP to form Glu-AMP and then transferred to the acceptor end of tRNA(Glu). The chain is Glutamate--tRNA ligase from Nitrosomonas eutropha (strain DSM 101675 / C91 / Nm57).